Consider the following 237-residue polypeptide: Sugar fermentation stimulation protein homolog (237 aa).

It belongs to the SfsA family.

In Pseudomonas syringae pv. syringae (strain B728a), this protein is Sugar fermentation stimulation protein homolog.